A 407-amino-acid chain; its full sequence is Inactive non-canonical poly(A) RNA polymerase protein Trf4-2 (407 aa).

Positions 85 and 87 each coordinate Mg(2+). The PAP-associated domain maps to Leu-221–Asn-280. The segment at Leu-354 to Asp-390 is disordered. Residues Pro-357 to Ala-371 show a composition bias toward low complexity.

Belongs to the DNA polymerase type-B-like family.

The protein is Inactive non-canonical poly(A) RNA polymerase protein Trf4-2 of Drosophila melanogaster (Fruit fly).